A 477-amino-acid polypeptide reads, in one-letter code: 3-isopropylmalate dehydratase large subunit (477 aa).

[4Fe-4S] cluster contacts are provided by Cys-358, Cys-419, and Cys-422.

This sequence belongs to the aconitase/IPM isomerase family. LeuC type 1 subfamily. As to quaternary structure, heterodimer of LeuC and LeuD. Requires [4Fe-4S] cluster as cofactor.

It catalyses the reaction (2R,3S)-3-isopropylmalate = (2S)-2-isopropylmalate. It functions in the pathway amino-acid biosynthesis; L-leucine biosynthesis; L-leucine from 3-methyl-2-oxobutanoate: step 2/4. In terms of biological role, catalyzes the isomerization between 2-isopropylmalate and 3-isopropylmalate, via the formation of 2-isopropylmaleate. The sequence is that of 3-isopropylmalate dehydratase large subunit from Acinetobacter baylyi (strain ATCC 33305 / BD413 / ADP1).